The chain runs to 253 residues: Proteasome subunit alpha type-3 (253 aa).

Positions 230–253 are disordered; that stretch reads ELTEKARKAGDAANKDEDSDNETH. The span at 231 to 253 shows a compositional bias: basic and acidic residues; that stretch reads LTEKARKAGDAANKDEDSDNETH. Serine 248 is subject to Phosphoserine.

Belongs to the peptidase T1A family. As to quaternary structure, the 26S proteasome consists of a 20S proteasome core and two 19S regulatory subunits. The 20S proteasome core is composed of 28 subunits that are arranged in four stacked rings, resulting in a barrel-shaped structure. The two end rings are each formed by seven alpha subunits, and the two central rings are each formed by seven beta subunits. The catalytic chamber with the active sites is on the inside of the barrel. Interacts with ntc.

It localises to the cytoplasm. Its subcellular location is the nucleus. Its function is as follows. The proteasome is a multicatalytic proteinase complex which is characterized by its ability to cleave peptides with Arg, Phe, Tyr, Leu, and Glu adjacent to the leaving group at neutral or slightly basic pH. The proteasome has an ATP-dependent proteolytic activity. The protein is Proteasome subunit alpha type-3 (Prosalpha7) of Drosophila melanogaster (Fruit fly).